A 274-amino-acid chain; its full sequence is Diaminopimelate epimerase (274 aa).

Substrate is bound by residues Asn-11 and Asn-62. The Proton donor role is filled by Cys-71. Residues 72–73, Asn-157, Asn-190, and 208–209 each bind substrate; these read GN and ER. Catalysis depends on Cys-217, which acts as the Proton acceptor. 218–219 contacts substrate; it reads GT.

The protein belongs to the diaminopimelate epimerase family. As to quaternary structure, homodimer.

It localises to the cytoplasm. The enzyme catalyses (2S,6S)-2,6-diaminopimelate = meso-2,6-diaminopimelate. Its pathway is amino-acid biosynthesis; L-lysine biosynthesis via DAP pathway; DL-2,6-diaminopimelate from LL-2,6-diaminopimelate: step 1/1. Catalyzes the stereoinversion of LL-2,6-diaminopimelate (L,L-DAP) to meso-diaminopimelate (meso-DAP), a precursor of L-lysine and an essential component of the bacterial peptidoglycan. This chain is Diaminopimelate epimerase, found in Elusimicrobium minutum (strain Pei191).